Here is a 356-residue protein sequence, read N- to C-terminus: S-adenosylmethionine:tRNA ribosyltransferase-isomerase (356 aa).

Belongs to the QueA family. In terms of assembly, monomer.

The protein resides in the cytoplasm. The catalysed reaction is 7-aminomethyl-7-carbaguanosine(34) in tRNA + S-adenosyl-L-methionine = epoxyqueuosine(34) in tRNA + adenine + L-methionine + 2 H(+). It participates in tRNA modification; tRNA-queuosine biosynthesis. Its function is as follows. Transfers and isomerizes the ribose moiety from AdoMet to the 7-aminomethyl group of 7-deazaguanine (preQ1-tRNA) to give epoxyqueuosine (oQ-tRNA). The polypeptide is S-adenosylmethionine:tRNA ribosyltransferase-isomerase (Escherichia coli O1:K1 / APEC).